A 563-amino-acid polypeptide reads, in one-letter code: Arginine--tRNA ligase (563 aa).

The 'HIGH' region signature appears at P121–H131.

This sequence belongs to the class-I aminoacyl-tRNA synthetase family. In terms of assembly, monomer.

The protein localises to the cytoplasm. It carries out the reaction tRNA(Arg) + L-arginine + ATP = L-arginyl-tRNA(Arg) + AMP + diphosphate. This chain is Arginine--tRNA ligase, found in Streptococcus pneumoniae (strain CGSP14).